The primary structure comprises 40 residues: Photosystem II reaction center protein J (40 aa).

The helical transmembrane segment at 8 to 28 (IPLWIIGTVAGILVIGLVGIF) threads the bilayer.

The protein belongs to the PsbJ family. In terms of assembly, PSII is composed of 1 copy each of membrane proteins PsbA, PsbB, PsbC, PsbD, PsbE, PsbF, PsbH, PsbI, PsbJ, PsbK, PsbL, PsbM, PsbT, PsbX, PsbY, PsbZ, Psb30/Ycf12, at least 3 peripheral proteins of the oxygen-evolving complex and a large number of cofactors. It forms dimeric complexes.

The protein localises to the plastid. The protein resides in the chloroplast thylakoid membrane. Its function is as follows. One of the components of the core complex of photosystem II (PSII). PSII is a light-driven water:plastoquinone oxidoreductase that uses light energy to abstract electrons from H(2)O, generating O(2) and a proton gradient subsequently used for ATP formation. It consists of a core antenna complex that captures photons, and an electron transfer chain that converts photonic excitation into a charge separation. This chain is Photosystem II reaction center protein J, found in Spinacia oleracea (Spinach).